The chain runs to 80 residues: Transcription elongation factor 1 homolog (80 aa).

Zn(2+) contacts are provided by Cys-25, Cys-28, Cys-49, and Cys-52.

It belongs to the ELOF1 family.

Its subcellular location is the nucleus. Functionally, transcription elongation factor implicated in the maintenance of proper chromatin structure in actively transcribed regions. The sequence is that of Transcription elongation factor 1 homolog from Encephalitozoon cuniculi (strain GB-M1) (Microsporidian parasite).